Reading from the N-terminus, the 338-residue chain is L-lysine 2,3-aminomutase (338 aa).

The Radical SAM core domain maps to 107 to 330 (HKYRNRLLFM…PKLAREIAGE (224 aa)). Positions 121, 125, and 128 each coordinate [4Fe-4S] cluster. Lys-333 is subject to N6-(pyridoxal phosphate)lysine.

It belongs to the radical SAM superfamily. KamA family. It depends on [4Fe-4S] cluster as a cofactor. Pyridoxal 5'-phosphate is required as a cofactor.

The catalysed reaction is L-lysine = D-beta-lysine. With EpmA is involved in the beta-lysylation step of the post-translational modification of translation elongation factor P (EF-P) on 'Lys-34'. EpmB appears to act before EpmA. Displays lysine 2,3-aminomutase activity, producing (R)-beta-lysine from (S)-alpha-lysine (L-lysine). This is L-lysine 2,3-aminomutase (epmB) from Haemophilus influenzae (strain ATCC 51907 / DSM 11121 / KW20 / Rd).